We begin with the raw amino-acid sequence, 372 residues long: MPLPDFHVSEPFTLGIELEMQVVNPPGYDLSQDSSMLIDAVKNKITAGEVKHDITESMLELATDVCRDINQAAGQFSAMQKVVLQAAADHHLEICGGGTHPFQKWQRQEVCDNERYQRTLENFGYLIQQATVFGQHVHVGCASGDDAIYLLHGLSRFVPHFIALSAASPYMQGTDTRFASSRPNIFSAFPDNGPMPWVSNWQQFEALFRCLSYTTMIDSIKDLHWDIRPSPHFGTVEVRVMDTPLTLSHAVNMAGLIQATAHWLLTERSFKHQEKDYLLYKFNRFQACRYGLEGVITDPHTGDRRSLTEATLRLLEKIAPSAHKIGASSAIEALHRQVVSGLNEAQLMRDFVANGGSLIGLVKKHCEIWAGE.

This sequence belongs to the glutamate--cysteine ligase type 2 family. YbdK subfamily. Homodimer.

It carries out the reaction L-cysteine + L-glutamate + ATP = gamma-L-glutamyl-L-cysteine + ADP + phosphate + H(+). In terms of biological role, ATP-dependent carboxylate-amine ligase which exhibits weak glutamate--cysteine ligase activity. In Escherichia coli O127:H6 (strain E2348/69 / EPEC), this protein is Putative glutamate--cysteine ligase 2 (ybdK).